Reading from the N-terminus, the 641-residue chain is Protein GAMETE EXPRESSED 3 (641 aa).

Positions 1–29 (MVAFRFVYIPLPFFFFFFFFFVFFSGVSQ) are cleaved as a signal peptide. A helical transmembrane segment spans residues 441-461 (IIWFLLFEFVIMVLFAALVRF). Positions 570–627 (ITIFQTPSDESSSEESYRDEHYDDVADDEHDEDDLDRKQKGKLLAHSEGSSNDGDGIA) are disordered. Over residues 584 to 593 (ESYRDEHYDD) the composition is skewed to basic and acidic residues. Over residues 594–603 (VADDEHDEDD) the composition is skewed to acidic residues.

As to expression, expressed in mature siliques and in pollen, mainly in the sperm cells. Detected in the egg cell within the female gametophyte.

The protein localises to the cell membrane. Required for micropylar pollen tube guidance. Plays a role during early embryo patterning. This is Protein GAMETE EXPRESSED 3 (GEX3) from Arabidopsis thaliana (Mouse-ear cress).